The chain runs to 190 residues: Guanylate kinase (190 aa).

The 183-residue stretch at 3-185 (NYIFIVSAPS…SLEQFCKYFE (183 aa)) folds into the Guanylate kinase-like domain. 10-17 (APSGAGKS) contacts ATP.

It belongs to the guanylate kinase family.

The protein localises to the cytoplasm. It carries out the reaction GMP + ATP = GDP + ADP. In terms of biological role, essential for recycling GMP and indirectly, cGMP. The protein is Guanylate kinase of Francisella tularensis subsp. tularensis (strain FSC 198).